The following is an 82-amino-acid chain: Small ribosomal subunit protein bS16 (82 aa).

This sequence belongs to the bacterial ribosomal protein bS16 family.

The chain is Small ribosomal subunit protein bS16 from Caldanaerobacter subterraneus subsp. tengcongensis (strain DSM 15242 / JCM 11007 / NBRC 100824 / MB4) (Thermoanaerobacter tengcongensis).